Consider the following 91-residue polypeptide: MAHNVFCARYKQEMEGLDEPPFDSDFGHKIYNNVSKRAWGEWIEHQKMLLNEYRLQPWTPQAQEFLVEQMNQYFFGEGAQLPKEYVPPSPR.

This sequence belongs to the Fe(2+)-trafficking protein family.

In terms of biological role, could be a mediator in iron transactions between iron acquisition and iron-requiring processes, such as synthesis and/or repair of Fe-S clusters in biosynthetic enzymes. The chain is Probable Fe(2+)-trafficking protein from Acidobacterium capsulatum (strain ATCC 51196 / DSM 11244 / BCRC 80197 / JCM 7670 / NBRC 15755 / NCIMB 13165 / 161).